A 255-amino-acid polypeptide reads, in one-letter code: Ribosomal RNA small subunit methyltransferase A (255 aa).

S-adenosyl-L-methionine contacts are provided by N11, L13, G38, E59, D83, and N101.

This sequence belongs to the class I-like SAM-binding methyltransferase superfamily. rRNA adenine N(6)-methyltransferase family. RsmA subfamily.

Its subcellular location is the cytoplasm. It catalyses the reaction adenosine(1518)/adenosine(1519) in 16S rRNA + 4 S-adenosyl-L-methionine = N(6)-dimethyladenosine(1518)/N(6)-dimethyladenosine(1519) in 16S rRNA + 4 S-adenosyl-L-homocysteine + 4 H(+). Functionally, specifically dimethylates two adjacent adenosines (A1518 and A1519) in the loop of a conserved hairpin near the 3'-end of 16S rRNA in the 30S particle. May play a critical role in biogenesis of 30S subunits. This is Ribosomal RNA small subunit methyltransferase A from Thiobacillus denitrificans (strain ATCC 25259 / T1).